We begin with the raw amino-acid sequence, 266 residues long: Inositol-1-monophosphatase (266 aa).

Residues E69, D86, L88, and D89 each contribute to the Mg(2+) site. E69 serves as a coordination point for substrate. Residues 88–91 (LDGT), R185, and D214 each bind substrate. Position 214 (D214) interacts with Mg(2+).

The protein belongs to the inositol monophosphatase superfamily. Mg(2+) serves as cofactor.

The catalysed reaction is a myo-inositol phosphate + H2O = myo-inositol + phosphate. The protein is Inositol-1-monophosphatase (suhB) of Mesorhizobium japonicum (strain LMG 29417 / CECT 9101 / MAFF 303099) (Mesorhizobium loti (strain MAFF 303099)).